Consider the following 118-residue polypeptide: Large ribosomal subunit protein bL20 (118 aa).

Belongs to the bacterial ribosomal protein bL20 family.

In terms of biological role, binds directly to 23S ribosomal RNA and is necessary for the in vitro assembly process of the 50S ribosomal subunit. It is not involved in the protein synthesizing functions of that subunit. In Azotobacter vinelandii (strain DJ / ATCC BAA-1303), this protein is Large ribosomal subunit protein bL20.